We begin with the raw amino-acid sequence, 106 residues long: Synaptic plasticity regulator PANTS (106 aa).

Residues 67–106 are disordered; the sequence is LQQSEKTRLEGKQNNSPVWTLRKNPPPDWYLPLDPGKPRQ.

Belongs to the UPF0545 family. Rapidly degraded by proteolysis following neuronal stimulation, resulting in increased AMPA receptor clustering.

Its subcellular location is the synapse. The protein resides in the synaptic cleft. Its function is as follows. Negatively regulates long-term potentiation and modulates adult synaptic plasticity. This Xenopus laevis (African clawed frog) protein is Synaptic plasticity regulator PANTS.